The following is a 122-amino-acid chain: Large ribosomal subunit protein uL14 (122 aa).

This sequence belongs to the universal ribosomal protein uL14 family. Part of the 50S ribosomal subunit. Forms a cluster with proteins L3 and L19. In the 70S ribosome, L14 and L19 interact and together make contacts with the 16S rRNA in bridges B5 and B8.

Functionally, binds to 23S rRNA. Forms part of two intersubunit bridges in the 70S ribosome. This chain is Large ribosomal subunit protein uL14, found in Micrococcus luteus (strain ATCC 4698 / DSM 20030 / JCM 1464 / CCM 169 / CCUG 5858 / IAM 1056 / NBRC 3333 / NCIMB 9278 / NCTC 2665 / VKM Ac-2230) (Micrococcus lysodeikticus).